A 325-amino-acid chain; its full sequence is E3 ubiquitin-protein ligase SIAH2 (325 aa).

Over residues 1-15 (MSRPSSTGPSANKPC) the composition is skewed to polar residues. A disordered region spans residues 1–43 (MSRPSSTGPSANKPCSKQPPPPQTPHAPSPAAPPAAATISAAG). Serine 6 carries the post-translational modification Phosphoserine. Serine 16 bears the Phosphoserine; by DYRK2 mark. Positions 17–33 (KQPPPPQTPHAPSPAAP) are enriched in pro residues. The residue at position 24 (threonine 24) is a Phosphothreonine; by MAPK14. Serine 29 carries the post-translational modification Phosphoserine; by DYRK2 and MAPK14. Residues 34-43 (PAAATISAAG) are compositionally biased toward low complexity. Serine 69 bears the Phosphoserine; by DYRK2 mark. The RING-type zinc finger occupies 81–116 (CPVCFDYVLPPILQCQAGHLVCNQCRQKLSCCPTCR). Threonine 120 carries the phosphothreonine; by DYRK2 modification. Positions 131-323 (VASAVLFPCK…LGINVTISTC (193 aa)) are SBD. The segment at 134–194 (AVLFPCKYAT…VMSHLMHAHK (61 aa)) adopts an SIAH-type zinc-finger fold. 8 residues coordinate Zn(2+): cysteine 139, cysteine 146, histidine 158, cysteine 162, cysteine 169, cysteine 176, histidine 188, and histidine 193.

This sequence belongs to the SINA (Seven in absentia) family. Homodimer. Interacts with VAV1, without mediating its ubiquitin-mediated degradation. Probable component of some large E3 complex possibly composed of UBE2D1, SIAH2, CACYBP/SIP, SKP1, APC and TBL1X. Interacts with UBE2I. Interacts with UBE2E2. Interacts with PEG10, which may inhibit its activity. Interacts with PEG3 and EGLN2. Interacts with DYRK2. Interacts with SNCAIP. Interacts with NR1D1 and NR1D2. Interacts with DCC. Interacts with AXIN1. Phosphorylated at Thr-24 and Ser-29 by MAPK14, which mediates the degradation by the proteasome of EGLN3. Phosphorylated at Ser-29 by DYRK2; this increases the ubiquitin ligase activity and promotes degradation of EGLN3. As to expression, detected in brain (at protein level).

Its subcellular location is the cytoplasm. It localises to the nucleus. The enzyme catalyses S-ubiquitinyl-[E2 ubiquitin-conjugating enzyme]-L-cysteine + [acceptor protein]-L-lysine = [E2 ubiquitin-conjugating enzyme]-L-cysteine + N(6)-ubiquitinyl-[acceptor protein]-L-lysine.. The protein operates within protein modification; protein ubiquitination. In terms of biological role, E3 ubiquitin-protein ligase that mediates ubiquitination and subsequent proteasomal degradation of target proteins. E3 ubiquitin ligases accept ubiquitin from an E2 ubiquitin-conjugating enzyme in the form of a thioester and then directly transfers the ubiquitin to targeted substrates. Mediates E3 ubiquitin ligase activity either through direct binding to substrates or by functioning as the essential RING domain subunit of larger E3 complexes. Mediates ubiquitination and proteasomal degradation of DYRK2 in response to hypoxia. Promotes monoubiquitination of SNCA. Triggers the ubiquitin-mediated degradation of many substrates, including proteins involved in transcription regulation (GPS2, POU2AF1, PML, NCOR1), a cell surface receptor (DCC), an antiapoptotic protein (BAG1), and a protein involved in synaptic vesicle function in neurons (SYP). It is thereby involved in apoptosis, tumor suppression, cell cycle, transcription and signaling processes. Has some overlapping function with SIAH1. Triggers the ubiquitin-mediated degradation of TRAF2, whereas SIAH1 does not. Regulates cellular clock function via ubiquitination of circadian transcriptional repressors NR1D1 and NR1D2 leading to their proteasomal degradation. Plays an important role in mediating the rhythmic degradation/clearance of NR1D1 and NR1D2 contributing to their circadian profile of protein abundance. Mediates ubiquitination and degradation of EGLN2 and EGLN3 in response to the unfolded protein response (UPR), leading to their degradation and subsequent stabilization of ATF4. Also part of the Wnt signaling pathway in which it mediates the Wnt-induced ubiquitin-mediated proteasomal degradation of AXIN1. This is E3 ubiquitin-protein ligase SIAH2 (Siah2) from Rattus norvegicus (Rat).